The chain runs to 172 residues: MDRAEKREFVAWLNGAFKESGSVVVAHYTGLTVAQMSDLRSKMRDAGGSVKVAKNRLAKIALQGTESEGIADLFTGQTVVAYANDPITAPKVAVEFAKANDKLVILGGAMGATTLNADGVKSLASLPSLDELRAKLVGMIQTPAQRLAVLTSAPAGQIARVIGAHARKNEAA.

Belongs to the universal ribosomal protein uL10 family. In terms of assembly, part of the ribosomal stalk of the 50S ribosomal subunit. The N-terminus interacts with L11 and the large rRNA to form the base of the stalk. The C-terminus forms an elongated spine to which L12 dimers bind in a sequential fashion forming a multimeric L10(L12)X complex.

Functionally, forms part of the ribosomal stalk, playing a central role in the interaction of the ribosome with GTP-bound translation factors. This Brucella abortus (strain S19) protein is Large ribosomal subunit protein uL10.